Reading from the N-terminus, the 126-residue chain is Small ribosomal subunit protein bS6 (126 aa).

The segment at 99-126 (PLPAPRVVPGTEAPEPAQAAETPEPEAS) is disordered. Low complexity predominate over residues 107–120 (PGTEAPEPAQAAET).

Belongs to the bacterial ribosomal protein bS6 family.

Binds together with bS18 to 16S ribosomal RNA. In Synechococcus sp. (strain CC9902), this protein is Small ribosomal subunit protein bS6.